We begin with the raw amino-acid sequence, 632 residues long: MTHEFTESYDVIVIGAGHAGVEASLATSRMGCKTLLATINLDMLAFMPCNPSIGGSAKGIVVREIDALGGEMGKNIDKTYIQMKMLNTGKGPAVRALRAQADKSLYAREMKHTVEKQANLTLRQTMIDDILVEDGRVVGVLTATGQKFAAKAVVVTTGTALRGEIILGELKYSSGPNNSLASVTLADNLKKLGLEIGRFKTGTPPRVKASSINYDQTEIQPGDDKPNHFSFMSKDADYLKDQIPCWLTYTNQTSHDIINQNLYRAPMFSGIVKGVGPRYCPSIEDKIVRFADKERHQLFLEPEGRDTEEVYVQGLSTSLPEDVQKDLIHSIKGLEKAEMMRTGYAIEYDIVLPHQLRATLETKLISGLFTAGQTNGTSGYEEAAGQGLIAGINAALKVQGKPELILKRSDAYIGVMIDDLVTKGTLEPYRLLTSRAEYRLILRHDNADMRLTEIGRDIGLVDDERWKAFEIKKNQFDNELKRLNSIKLKPVKATNDRVQELGFKPLTDAMTAKEFMRRPEIDYATAVSFVGPAAEDLDAKIIELLETEIKYEGYIRKALDQVAKMKRMEEKRIPANIDWDAIDSIATEARQKFKKINPETIGQASRISGVNPADISILMIYLEGNGKAHRKY.

FAD is bound by residues 15–20 (GAGHAG), Ile127, and Ser182. 276–290 (GPRYCPSIEDKIVRF) serves as a coordination point for NAD(+). Residue Gln373 coordinates FAD.

Belongs to the MnmG family. As to quaternary structure, homodimer. Heterotetramer of two MnmE and two MnmG subunits. FAD is required as a cofactor.

The protein resides in the cytoplasm. NAD-binding protein involved in the addition of a carboxymethylaminomethyl (cmnm) group at the wobble position (U34) of certain tRNAs, forming tRNA-cmnm(5)s(2)U34. This chain is tRNA uridine 5-carboxymethylaminomethyl modification enzyme MnmG, found in Streptococcus pyogenes serotype M12 (strain MGAS2096).